Reading from the N-terminus, the 198-residue chain is Recombination protein RecR (198 aa).

The C4-type zinc finger occupies 57–72; the sequence is CSVCGHITENDPCYIC. A Toprim domain is found at 80 to 175; that stretch reads SVICVVEDDK…KVTRLAQGLS (96 aa).

Belongs to the RecR family.

Functionally, may play a role in DNA repair. It seems to be involved in an RecBC-independent recombinational process of DNA repair. It may act with RecF and RecO. The sequence is that of Recombination protein RecR from Staphylococcus aureus (strain MRSA252).